We begin with the raw amino-acid sequence, 1430 residues long: 3'-5' RNA helicase YTHDC2 (1430 aa).

The tract at residues 1-37 (MSRPSSVSPRQPAPGGGGGGGPSPCGPGGGGRAKGLK) is disordered. Residues 14 to 33 (PGGGGGGGPSPCGPGGGGRA) show a composition bias toward gly residues. The R3H domain maps to 38–106 (DIRIDEEVKI…NRYLTVKKKD (69 aa)). The Helicase ATP-binding domain occupies 203 to 369 (VKIIKENKVV…FGSCPVIYIQ (167 aa)). Position 216–223 (216–223 (GETGSGKT)) interacts with ATP. The short motif at 316 to 319 (DEVH) is the DEAH box element. 2 ANK repeats span residues 506–538 (TSATALMVAAGRGFASQVEQLISMGANVHSKAS) and 539–571 (NGWMALDWAKHFGQTEIVDLLESYSASLEFGNL). The Helicase C-terminal domain maps to 612–784 (LLYNICHSCD…ELCLHTKLLA (173 aa)). 3 positions are modified to phosphoserine: Ser1089, Ser1090, and Ser1092. Over residues 1164–1174 (EQSAGLQQPSG) the composition is skewed to polar residues. The segment at 1164 to 1288 (EQSAGLQQPS…SPSPRPNMPV (125 aa)) is disordered. The span at 1191–1200 (SSWRSNNSRK) shows a compositional bias: low complexity. The residue at position 1202 (Ser1202) is a Phosphoserine. A compositionally biased stretch (basic and acidic residues) spans 1231–1249 (KYKDRGILHPKRGTEDRSD). Residues 1250–1264 (QSSVKSTDSSSYPSP) show a composition bias toward low complexity. Ser1263, Ser1267, and Ser1281 each carry phosphoserine. The region spanning 1288–1418 (VRYFIMKSSN…QVGEQLLQLW (131 aa)) is the YTH domain. Residues 1294–1296 (KSS), Trp1310, and Trp1360 each bind RNA.

The protein belongs to the DEAD box helicase family. DEAH subfamily. As to quaternary structure, interacts with MEIOC; binds transcripts that regulate the mitotic cell cycle inhibiting progression into metaphase, thereby allowing meiotic prophase to proceed normally. Interacts (via ANK repeats) with XRN1. Interacts with ZCCHC4. Associates with the small ribosomal subunit. Interacts with RBM46.

The protein localises to the cytoplasm. It localises to the perinuclear region. The enzyme catalyses ATP + H2O = ADP + phosphate + H(+). In terms of biological role, 3'-5' RNA helicase that plays a key role in the male and female germline by promoting transition from mitotic to meiotic divisions in stem cells. Specifically recognizes and binds N6-methyladenosine (m6A)-containing RNAs, a modification present at internal sites of mRNAs and some non-coding RNAs that plays a role in the efficiency of RNA processing and stability. Essential for ensuring a successful progression of the meiotic program in the germline by regulating the level of m6A-containing RNAs. Acts by binding and promoting degradation of m6A-containing mRNAs: the 3'-5' RNA helicase activity is required for this process and RNA degradation may be mediated by XRN1 exoribonuclease. Required for both spermatogenesis and oogenesis. This is 3'-5' RNA helicase YTHDC2 from Pongo abelii (Sumatran orangutan).